A 316-amino-acid chain; its full sequence is Cell division protein ZipA (316 aa).

The Periplasmic segment spans residues 1–5 (MQELR). A helical transmembrane segment spans residues 6 to 26 (FVLIVVGALAIAALLFHGLWS). Residues 27–316 (SKKEGKAKFG…QIVEFNAANA (290 aa)) lie on the Cytoplasmic side of the membrane. The segment at 36–65 (GNKPLGKLDVDQGDKDSVEQERSFAPATED) is disordered. Over residues 41 to 57 (GKLDVDQGDKDSVEQER) the composition is skewed to basic and acidic residues.

Belongs to the ZipA family. In terms of assembly, interacts with FtsZ via their C-terminal domains.

The protein localises to the cell inner membrane. Its function is as follows. Essential cell division protein that stabilizes the FtsZ protofilaments by cross-linking them and that serves as a cytoplasmic membrane anchor for the Z ring. Also required for the recruitment to the septal ring of downstream cell division proteins. The sequence is that of Cell division protein ZipA from Vibrio parahaemolyticus serotype O3:K6 (strain RIMD 2210633).